The sequence spans 160 residues: Crossover junction endodeoxyribonuclease RuvC (160 aa).

Residues D9, E68, and D141 contribute to the active site. Mg(2+)-binding residues include D9, E68, and D141.

The protein belongs to the RuvC family. As to quaternary structure, homodimer which binds Holliday junction (HJ) DNA. The HJ becomes 2-fold symmetrical on binding to RuvC with unstacked arms; it has a different conformation from HJ DNA in complex with RuvA. In the full resolvosome a probable DNA-RuvA(4)-RuvB(12)-RuvC(2) complex forms which resolves the HJ. The cofactor is Mg(2+).

It localises to the cytoplasm. It catalyses the reaction Endonucleolytic cleavage at a junction such as a reciprocal single-stranded crossover between two homologous DNA duplexes (Holliday junction).. Functionally, the RuvA-RuvB-RuvC complex processes Holliday junction (HJ) DNA during genetic recombination and DNA repair. Endonuclease that resolves HJ intermediates. Cleaves cruciform DNA by making single-stranded nicks across the HJ at symmetrical positions within the homologous arms, yielding a 5'-phosphate and a 3'-hydroxyl group; requires a central core of homology in the junction. The consensus cleavage sequence is 5'-(A/T)TT(C/G)-3'. Cleavage occurs on the 3'-side of the TT dinucleotide at the point of strand exchange. HJ branch migration catalyzed by RuvA-RuvB allows RuvC to scan DNA until it finds its consensus sequence, where it cleaves and resolves the cruciform DNA. This is Crossover junction endodeoxyribonuclease RuvC from Campylobacter jejuni subsp. jejuni serotype O:23/36 (strain 81-176).